Reading from the N-terminus, the 382-residue chain is D-galactonate dehydratase (382 aa).

Aspartate 183 is a binding site for Mg(2+). Histidine 185 (proton donor) is an active-site residue. Residues glutamate 209 and glutamate 235 each coordinate Mg(2+). Catalysis depends on histidine 285, which acts as the Proton acceptor.

This sequence belongs to the mandelate racemase/muconate lactonizing enzyme family. GalD subfamily. Requires Mg(2+) as cofactor.

The catalysed reaction is D-galactonate = 2-dehydro-3-deoxy-D-galactonate + H2O. It functions in the pathway carbohydrate acid metabolism; D-galactonate degradation; D-glyceraldehyde 3-phosphate and pyruvate from D-galactonate: step 1/3. In terms of biological role, catalyzes the dehydration of D-galactonate to 2-keto-3-deoxy-D-galactonate. This chain is D-galactonate dehydratase, found in Cronobacter sakazakii (strain ATCC BAA-894) (Enterobacter sakazakii).